Here is a 309-residue protein sequence, read N- to C-terminus: Glutaminase (309 aa).

Residues S64, N114, E160, N167, Y191, Y243, and V261 each coordinate substrate.

Belongs to the glutaminase family. Homotetramer.

The enzyme catalyses L-glutamine + H2O = L-glutamate + NH4(+). The sequence is that of Glutaminase from Rhizobium johnstonii (strain DSM 114642 / LMG 32736 / 3841) (Rhizobium leguminosarum bv. viciae).